Here is a 451-residue protein sequence, read N- to C-terminus: tRNA modification GTPase MnmE (451 aa).

Residues Arg28, Glu85, and Lys124 each coordinate (6S)-5-formyl-5,6,7,8-tetrahydrofolate. The TrmE-type G domain maps to Gly220–Leu373. A K(+)-binding site is contributed by Asn230. Residues Asn230 to Ser235, Thr249 to Thr255, and Asp274 to Gly277 contribute to the GTP site. Ser234 serves as a coordination point for Mg(2+). Thr249, Val251, and Thr254 together coordinate K(+). Mg(2+) is bound at residue Thr255. Position 451 (Lys451) interacts with (6S)-5-formyl-5,6,7,8-tetrahydrofolate.

It belongs to the TRAFAC class TrmE-Era-EngA-EngB-Septin-like GTPase superfamily. TrmE GTPase family. In terms of assembly, homodimer. Heterotetramer of two MnmE and two MnmG subunits. Requires K(+) as cofactor.

The protein localises to the cytoplasm. Its function is as follows. Exhibits a very high intrinsic GTPase hydrolysis rate. Involved in the addition of a carboxymethylaminomethyl (cmnm) group at the wobble position (U34) of certain tRNAs, forming tRNA-cmnm(5)s(2)U34. The sequence is that of tRNA modification GTPase MnmE from Xylella fastidiosa (strain Temecula1 / ATCC 700964).